Reading from the N-terminus, the 364-residue chain is Spermidine/putrescine import ATP-binding protein PotA (364 aa).

The ABC transporter domain maps to 5 to 235 (LSFKSVSKQY…PVNRFVADFI (231 aa)). 37–44 (GPSGCGKT) contacts ATP.

This sequence belongs to the ABC transporter superfamily. Spermidine/putrescine importer (TC 3.A.1.11.1) family. As to quaternary structure, the complex is composed of two ATP-binding proteins (PotA), two transmembrane proteins (PotB and PotC) and a solute-binding protein (PotD).

Its subcellular location is the cell membrane. The catalysed reaction is ATP + H2O + polyamine-[polyamine-binding protein]Side 1 = ADP + phosphate + polyamineSide 2 + [polyamine-binding protein]Side 1.. Functionally, part of the ABC transporter complex PotABCD involved in spermidine/putrescine import. Responsible for energy coupling to the transport system. This is Spermidine/putrescine import ATP-binding protein PotA from Staphylococcus saprophyticus subsp. saprophyticus (strain ATCC 15305 / DSM 20229 / NCIMB 8711 / NCTC 7292 / S-41).